We begin with the raw amino-acid sequence, 1526 residues long: MMRWRLAVLFLTLLASTTGDDTTTKASVSTTTKKGTDGPHLTTDDEGFLTVIQGFATQLQCVLNTCSKDVIWYKDGSQISKGSQFLNTTSEKAYKIQHSIEVDYEKGCSGECDDSKPCGDGFSCVDNQCCSCRREEFTLVLRNLTFDESGRYRCQLGNKSELLEFQVEVLESGLKGGFHENISYDHSECCQEKGISPLCRGMCKPSEMDQHHFDPTSCKTDDYKHFLSCATEDGTRSHVHCCKTQLVPSFCYDFCSGDFQMLRRSHRLCLYYLPEIFSCLDRAYLPYPDPPTAIEVNAVEHDKLSVCWKEPEKHESNKMFPILDYAVYFKEIPNFPLLGGDMGLPLLTGDYSDIGDIQEDDYQQEEDDAEEVVKDSTIAPRGKRDVDFESDGVKVQIREKRSTMVIVTRDDVTNSTTIREFAFQNVNTTERCVTLSDLRSSTRYIVYVTARNEYGTSVPSVRNIASTNVHMVKNNASLPDSMKCCTDANVTSFCSSKMCNVAEDPSSFSTITIATTCRAEWPKVSPCIADGRNHTDCCLKKGVQHDCLEICSGSTKELGVHSVLCLNLDLQAIYQCIRQGYETHPSAPGNVTISELTAHSVTVQWTEPNSNAHLVENYTLFIRKNEHGEAVRTVKNVISPHVELGLDPDSEYVLTLQSHSANGTSLPSTAKLFSTLPTTRPPLCTIGEPIYMNDGRVMICDAVNPCPNGFRCTGAGSDLSYCCPHDGTHSSEEFTSCCKEQKMPESCMSSCQYNMTLPESCKENLNTWVQCASEGHDHLRCCLQEEVSKPCQTACMHPFTVPADECFSEVSKYRTCFSAAHQALPAAVRNVEVSSISKDSATISWEDLEANIIVFRVQLFEKGGNLIKTENSSADIFRFIDLEPNKDYSVRVTAINFLGEGPPSWNATFTTKPAQIYEGDRPVAPEKLRISWNSGPRVNVTWDPVSVRRNAEVVTKPIEYTIYYLDTEQSSTWTTLRTNQTWVVMRDLRKDALYYVYVTAKEDNRTSRSSSIITILAQKDSPGLPEPTIVIEPDHKDGVFSPGEKISINCSLPNIKKHLNIDLTVGSHVVQNDHGALWVILETEADEAMDTATCAVSDTDGRQHVAMKHLVLERKASVTMKKDKIRVLDDQSVEIECIYRGGGLDPKISFEKDGKKASRGFLNLKKTEAGYVAKWHIRKVKQEDAGFYKCVVTSSDGSRVEASSEVIFSTETLPVNPKLILQCCEDEGITGDCLQACNIGRTSLSIKNQNCTRFAVSLLKCASDIRDHSDCCIASGVTSKCLPLCSGDSFSPDIDCSEHAVSIMTCSVKSHEHAPSEVSNVRIKASEGKVNIEWDYPLTKDYKYFAVYYRKAHDDHEDWHKLKTIQQNIELDVDPSEDYEVGILAANALGHSRLMYSAIPKDSEPRRSASKGSSSAFWIVVILVVFGVLIAGLAVLSKRRELPYPIGKFIGRRNDPNQPTVAFENPAYGEPWGGAEVEIRGLGGSATTGTAAATQSEWQSANLEANSTTDNSHEYRNGMRYAKLET.

An N-terminal signal peptide occupies residues 1–19 (MMRWRLAVLFLTLLASTTG). Residues 20 to 39 (DDTTTKASVSTTTKKGTDGP) are disordered. The Extracellular portion of the chain corresponds to 20-1415 (DDTTTKASVS…RRSASKGSSS (1396 aa)). The span at 24-33 (TKASVSTTTK) shows a compositional bias: low complexity. Positions 39–170 (PHLTTDDEGF…ELLEFQVEVL (132 aa)) constitute an Ig-like C2-type 1 domain. C61 and C154 are joined by a disulfide. 12 N-linked (GlcNAc...) asparagine glycosylation sites follow: N87, N143, N158, N181, N414, N427, N475, N489, N533, N590, N617, and N662. The region spanning 379 to 470 (APRGKRDVDF…VRNIASTNVH (92 aa)) is the Fibronectin type-III 1 domain. Residues 587–678 (APGNVTISEL…TAKLFSTLPT (92 aa)) form the Fibronectin type-III 2 domain. In terms of domain architecture, WR1 spans 682 to 724 (PLCTIGEPIYMNDGRVMICDAVNPCPNGFRCTGAGSDLSYCCP). N-linked (GlcNAc...) asparagine glycosylation is found at N754, N871, N906, N939, N979, N1004, and N1049. Fibronectin type-III domains follow at residues 827–914 (AVRN…TKPA) and 924–1020 (APEK…AQKD). In terms of domain architecture, Ig-like C2-type 2 spans 1116 to 1207 (ASVTMKKDKI…SRVEASSEVI (92 aa)). Residues C1137 and C1190 are joined by a disulfide bond. N-linked (GlcNAc...) asparagine glycosylation occurs at N1250. Residues 1314–1406 (APSEVSNVRI…SAIPKDSEPR (93 aa)) form the Fibronectin type-III 5 domain. Residues 1416–1436 (AFWIVVILVVFGVLIAGLAVL) form a helical membrane-spanning segment. Residues 1437–1526 (SKRRELPYPI…NGMRYAKLET (90 aa)) lie on the Cytoplasmic side of the membrane. Residues 1485–1518 (SATTGTAAATQSEWQSANLEANSTTDNSHEYRNG) form a disordered region. The span at 1495–1510 (QSEWQSANLEANSTTD) shows a compositional bias: polar residues.

The protein localises to the cell membrane. The sequence is that of Ig-like and fibronectin type-III domain-containing protein 2 from Caenorhabditis elegans.